A 484-amino-acid polypeptide reads, in one-letter code: MLPQKQGEEAIVSSFNETDQQEGVVGREEEVEDHSFSVKNFLWHGGSVWDAWFSCASNQVAQVLLTLPYSFSQLGMLSGILLQVFYGILGSWTAYLISVLYVEYRSRKEKENVNFKNHVIQWFEVLDGLLGPYWKALGLAFNCTFLLFGSVIQLIACASNIYYINDNLDKRTWTYIFGACCATTVFIPSFHNYRIWSFLGLGMTTYTAWYLTIASIVHGQAENVTHTGPKKLVLYFTGATNILYTFGGHAVTVEIMHAMWKPQKFKYIYLMATLYVFTLTIPSATAVYWAFGDELLNHSNAFSLLPKNGWRDGAVILMLIHQFITFGFACTPLYFVWEKVIGMHDTRSICLRALARLPVVIPIWFLAIIFPFFGPINSAVGALLVSFTVYIIPSAAHMLTYRKASARKNAAEKPPFFMPSWTAMYIFNAFIVIWVLVVGFGFGGWASMTNFIRQIDTFGLFAKCYQCKPPPVMAAAPPPHALHH.

The Cytoplasmic segment spans residues 1–59; sequence MLPQKQGEEAIVSSFNETDQQEGVVGREEEVEDHSFSVKNFLWHGGSVWDAWFSCASNQ. A helical membrane pass occupies residues 60-77; sequence VAQVLLTLPYSFSQLGML. Topologically, residues 78-79 are extracellular; sequence SG. The chain crosses the membrane as a helical span at residues 80–100; it reads ILLQVFYGILGSWTAYLISVL. Residues 101-135 are Cytoplasmic-facing; that stretch reads YVEYRSRKEKENVNFKNHVIQWFEVLDGLLGPYWK. The helical transmembrane segment at 136–156 threads the bilayer; it reads ALGLAFNCTFLLFGSVIQLIA. The Extracellular portion of the chain corresponds to 157–172; sequence CASNIYYINDNLDKRT. Residues 173 to 193 form a helical membrane-spanning segment; it reads WTYIFGACCATTVFIPSFHNY. Residues 194-196 lie on the Cytoplasmic side of the membrane; the sequence is RIW. Residues 197–217 traverse the membrane as a helical segment; sequence SFLGLGMTTYTAWYLTIASIV. At 218-232 the chain is on the extracellular side; sequence HGQAENVTHTGPKKL. Asn223 is a glycosylation site (N-linked (GlcNAc...) asparagine). Residues 233 to 253 traverse the membrane as a helical segment; the sequence is VLYFTGATNILYTFGGHAVTV. The Cytoplasmic segment spans residues 254-266; the sequence is EIMHAMWKPQKFK. A helical transmembrane segment spans residues 267–287; the sequence is YIYLMATLYVFTLTIPSATAV. Residues 288–314 are Extracellular-facing; sequence YWAFGDELLNHSNAFSLLPKNGWRDGA. A glycan (N-linked (GlcNAc...) asparagine) is linked at Asn297. A helical membrane pass occupies residues 315–335; that stretch reads VILMLIHQFITFGFACTPLYF. At 336-356 the chain is on the cytoplasmic side; that stretch reads VWEKVIGMHDTRSICLRALAR. A helical transmembrane segment spans residues 357 to 377; it reads LPVVIPIWFLAIIFPFFGPIN. Position 378 (Ser378) is a topological domain, extracellular. Residues 379–399 form a helical membrane-spanning segment; the sequence is AVGALLVSFTVYIIPSAAHML. The Cytoplasmic portion of the chain corresponds to 400–425; sequence TYRKASARKNAAEKPPFFMPSWTAMY. Residues 426–446 form a helical membrane-spanning segment; it reads IFNAFIVIWVLVVGFGFGGWA. Topologically, residues 447–484 are extracellular; that stretch reads SMTNFIRQIDTFGLFAKCYQCKPPPVMAAAPPPHALHH.

Belongs to the amino acid/polyamine transporter 2 family. Amino acid/auxin permease (AAAP) (TC 2.A.18.1) subfamily. Shoots and roots of nodulating plants. Higher levels in roots, flowers and stems, lower in nodules, leaves, petioles and shoot apices.

It localises to the cell membrane. Carrier protein involved in proton-driven auxin influx. Mediates the formation of auxin gradient from developing leaves (site of auxin biosynthesis) to tips by contributing to the loading of auxin in vascular tissues and facilitating acropetal (base to tip) auxin transport within inner tissues of the root apex, and basipetal (tip to base) auxin transport within outer tissues of the root apex. May be involved in lateral roots and nodules formation. The chain is Auxin transporter-like protein 2 (LAX2) from Medicago truncatula (Barrel medic).